Consider the following 75-residue polypeptide: Sec-independent protein translocase protein TatA (75 aa).

The chain crosses the membrane as a helical span at residues 1–21; that stretch reads MGMPSMPELLIVLAIVVLLFG. The tract at residues 47 to 75 is disordered; the sequence is DEEEEVKEITKKEEPKVEAAAEEKKSENA. Residues 53-75 are compositionally biased toward basic and acidic residues; that stretch reads KEITKKEEPKVEAAAEEKKSENA.

Belongs to the TatA/E family. In terms of assembly, the Tat system comprises two distinct complexes: a TatABC complex, containing multiple copies of TatA, TatB and TatC subunits, and a separate TatA complex, containing only TatA subunits. Substrates initially bind to the TatABC complex, which probably triggers association of the separate TatA complex to form the active translocon.

It localises to the cell inner membrane. In terms of biological role, part of the twin-arginine translocation (Tat) system that transports large folded proteins containing a characteristic twin-arginine motif in their signal peptide across membranes. TatA could form the protein-conducting channel of the Tat system. The protein is Sec-independent protein translocase protein TatA of Sulfurovum sp. (strain NBC37-1).